Here is a 4168-residue protein sequence, read N- to C-terminus: Centrosome-associated protein ALMS1 (4168 aa).

Over residues 1–29 (MEPEDLPWPGELEEEEEEEEEEEEEEEEA) the composition is skewed to acidic residues. A disordered region spans residues 1–69 (MEPEDLPWPG…YGPQHLESID (69 aa)). The span at 30–40 (AAAAAANVDDV) shows a compositional bias: low complexity. Over residues 49–58 (EAGRELDSDS) the composition is skewed to basic and acidic residues. The residue at position 464 (Ser-464) is a Phosphoserine. Repeat copies occupy residues 539-585 (QKTL…SIFY), 586-632 (QQGL…GTFY), 633-679 (QQEL…LFFY), 680-726 (RQTL…GIFY), 727-774 (QQEF…SILY), 775-821 (PQDL…LVFY), 822-871 (QQAL…SAFY), 872-918 (QQTL…IIFS), 919-965 (QQTL…SVFY), 966-1013 (QQEL…SIFY), 1014-1060 (QQEW…SVLY), 1061-1107 (PQVL…GIFY), 1108-1155 (QQTL…SIFH), 1156-1202 (QQAL…GIFY), 1203-1249 (QQTL…GIFY), 1250-1297 (QQVL…SIFY), 1298-1344 (QQSL…GVFY), 1345-1392 (QQVL…SIFY), 1393-1439 (QQSL…GSFY), 1440-1486 (QQVL…IVIY), 1487-1534 (KQAF…GSFY), 1535-1581 (QLAL…IVNY), 1582-1628 (KQAF…ITFY), 1629-1675 (RQAL…VIFY), 1676-1722 (QQTL…IVFY), 1723-1769 (QQAL…NISY), 1770-1816 (QQEL…IVSY), 1817-1861 (QREL…VISY), 1862-1906 (EQEL…SIFH), 1907-1951 (QQEL…SVIS), 1952-1999 (QQEL…LKIS), 2060-2105 (QQLP…NIFS), 2106-2152 (PQEL…DIFY), and 2153-2200 (QKDL…LVSE). Positions 539–2200 (QKTLADTHLT…HGENHKLVSE (1662 aa)) are 34 X 47 AA approximate tandem repeat. 2 disordered regions span residues 558 to 579 (PEPA…SHRG) and 606 to 625 (GLAD…YSHR). Polar residues-rich tracts occupy residues 564 to 574 (KTATPTVLSSS) and 609 to 622 (DQTT…STSY). 2 disordered regions span residues 699-718 (SGPA…PHSH) and 735-769 (QTEE…QREK). Over residues 705–715 (KTGTATVLSTP) the composition is skewed to polar residues. Residues 841 to 865 (SGPADGKTGTPAVTSTSSASSSLGE) form a disordered region. Disordered regions lie at residues 946 to 969 (GTPT…QQEL), 983 to 1007 (AIPG…SHRE), and 1027 to 1055 (LKVS…QREK). A compositionally biased stretch (polar residues) spans 989-1003 (DQKTVPTPTVPSGSF). Residue Ser-1189 is modified to Phosphoserine. The segment at 1221–1241 (VLGPADQKTGTPTPTSASYSH) is disordered. The span at 1228–1240 (KTGTPTPTSASYS) shows a compositional bias: polar residues. Residues 1786–1806 (SNVPGPADQKTGVSTVTSTSY) form a disordered region. Positions 1796-1806 (TGVSTVTSTSY) are enriched in low complexity. The residue at position 2143 (Ser-2143) is a Phosphoserine. Disordered regions lie at residues 2456–2477 (ITDS…SSVD) and 2600–2621 (HPCA…NPSS). Ser-2466 is modified (phosphoserine). Residue Ser-2632 is modified to Phosphoserine. 6 disordered regions span residues 2753 to 2828 (HFTE…STRA), 2892 to 2912 (KAPR…QHQD), 3283 to 3310 (RQIP…AIAP), 3389 to 3426 (EAAQ…MKNL), 3566 to 3594 (QVRD…TTQH), and 3643 to 3704 (SLQV…HRAG). Basic and acidic residues predominate over residues 2754–2766 (FTEEQNPPRDLKQ). The segment covering 2767 to 2779 (KTSSPSSFKMHSN) has biased composition (polar residues). Composition is skewed to basic and acidic residues over residues 2780 to 2793 (SQDK…EGRR) and 2800 to 2816 (VDFE…ERSD). Residue Ser-2805 is modified to Phosphoserine. The segment covering 2817–2828 (FTGSHSEPSTRA) has biased composition (polar residues). Over residues 3294–3305 (DTTVESSHSGSN) the composition is skewed to polar residues. The span at 3392–3404 (QAKEKESLQKDTA) shows a compositional bias: basic and acidic residues. Residues 3405–3416 (DSSAAAAAEHSA) are compositionally biased toward low complexity. 2 stretches are compositionally biased toward basic and acidic residues: residues 3649-3664 (STHD…KEWS) and 3680-3694 (KSLE…ELKK). A compositionally biased stretch (basic residues) spans 3695–3704 (SKVLSHHRAG). The tract at residues 4036 to 4167 (TLQESLQFHR…NQLLGRKVPW (132 aa)) is ALMS motif.

The protein belongs to the ALMS1 family. As to expression, expressed in all tissues tested including adipose and pancreas. Expressed by beta-cells of the islets in the pancreas (at protein level).

It localises to the cytoplasm. The protein localises to the cytoskeleton. Its subcellular location is the microtubule organizing center. The protein resides in the centrosome. It is found in the cilium basal body. It localises to the spindle pole. In terms of biological role, involved in PCM1-dependent intracellular transport. Required, directly or indirectly, for the localization of NCAPD2 to the proximal ends of centrioles. Required for proper formation and/or maintenance of primary cilia (PC), microtubule-based structures that protrude from the surface of epithelial cells. The chain is Centrosome-associated protein ALMS1 (ALMS1) from Homo sapiens (Human).